The following is a 248-amino-acid chain: Probable transcriptional regulatory protein MCA1220 (248 aa).

It belongs to the TACO1 family.

The protein localises to the cytoplasm. The protein is Probable transcriptional regulatory protein MCA1220 of Methylococcus capsulatus (strain ATCC 33009 / NCIMB 11132 / Bath).